The chain runs to 150 residues: Large ribosomal subunit protein bL9 (150 aa).

This sequence belongs to the bacterial ribosomal protein bL9 family.

Binds to the 23S rRNA. The polypeptide is Large ribosomal subunit protein bL9 (Variovorax paradoxus (strain S110)).